The sequence spans 313 residues: tRNA dimethylallyltransferase 2 (313 aa).

16 to 23 contributes to the ATP binding site; it reads GPTASGKT. 18 to 23 contacts substrate; sequence TASGKT. Interaction with substrate tRNA regions lie at residues 41–44 and 161–165; these read DSRQ and QRTIR.

Belongs to the IPP transferase family. As to quaternary structure, monomer. Mg(2+) serves as cofactor.

The catalysed reaction is adenosine(37) in tRNA + dimethylallyl diphosphate = N(6)-dimethylallyladenosine(37) in tRNA + diphosphate. In terms of biological role, catalyzes the transfer of a dimethylallyl group onto the adenine at position 37 in tRNAs that read codons beginning with uridine, leading to the formation of N6-(dimethylallyl)adenosine (i(6)A). The protein is tRNA dimethylallyltransferase 2 of Pelobacter propionicus (strain DSM 2379 / NBRC 103807 / OttBd1).